A 288-amino-acid chain; its full sequence is Bifunctional protein FolD (288 aa).

NADP(+)-binding positions include 163–165 (GRS), Ser-188, and Ile-229.

It belongs to the tetrahydrofolate dehydrogenase/cyclohydrolase family. In terms of assembly, homodimer.

It carries out the reaction (6R)-5,10-methylene-5,6,7,8-tetrahydrofolate + NADP(+) = (6R)-5,10-methenyltetrahydrofolate + NADPH. The catalysed reaction is (6R)-5,10-methenyltetrahydrofolate + H2O = (6R)-10-formyltetrahydrofolate + H(+). It functions in the pathway one-carbon metabolism; tetrahydrofolate interconversion. Its function is as follows. Catalyzes the oxidation of 5,10-methylenetetrahydrofolate to 5,10-methenyltetrahydrofolate and then the hydrolysis of 5,10-methenyltetrahydrofolate to 10-formyltetrahydrofolate. This is Bifunctional protein FolD from Campylobacter curvus (strain 525.92).